A 582-amino-acid polypeptide reads, in one-letter code: MITRMSELFLRTLRDDPADAEVASHKLLIRAGYIRPVAPGLYSWLPLGLRVLRNIERVIRDEMNAIGGQEILFPALLPRAPYETTNRWTQYGDSVFRLKDRRGNDYLLGPTHEELFTLTVKGEYSSYKDFPLTLYQIQTKYRDEARPRAGILRAREFVMKDSYSFDIDAAGLKAAYHAHREAYQRIFDRLQVRYVIVSAVSGAMGGSASEEFLAESPSGEDAFVRCLESGYAANVEAVVTARPDTLPIDGLPEAVVHDTGDTPTIASLVAWANEADLGRTVTAADTLKNVLIKVRQPGGDTELLAIGVPGDREVDDKRLGAALEPADYALLDDDDFAKHPFLVKGYIGPKALRENNVRYLVDPRIVDGTSWITGADQPGRHVVGLVAGRDFTADGTIEAAEVREGDPSPDGAGPLVMARGIEIGHIFQLGSKYTDAFTADVLGEDGKPVRLTMGSYGIGVSRLVAVVAEQHHDELGLRWPSTVAPFDVHLVIANKDAQARAGATALAADLDRLGVEVLLDDRQASPGVKFKDAELLGMPWIVVVGRGWADGVVELRDRFSGQTRELVAGASLATDIAAAVTG.

The protein belongs to the class-II aminoacyl-tRNA synthetase family. ProS type 1 subfamily. In terms of assembly, homodimer.

The protein resides in the cytoplasm. It carries out the reaction tRNA(Pro) + L-proline + ATP = L-prolyl-tRNA(Pro) + AMP + diphosphate. Functionally, catalyzes the attachment of proline to tRNA(Pro) in a two-step reaction: proline is first activated by ATP to form Pro-AMP and then transferred to the acceptor end of tRNA(Pro). As ProRS can inadvertently accommodate and process non-cognate amino acids such as alanine and cysteine, to avoid such errors it has two additional distinct editing activities against alanine. One activity is designated as 'pretransfer' editing and involves the tRNA(Pro)-independent hydrolysis of activated Ala-AMP. The other activity is designated 'posttransfer' editing and involves deacylation of mischarged Ala-tRNA(Pro). The misacylated Cys-tRNA(Pro) is not edited by ProRS. The sequence is that of Proline--tRNA ligase from Mycobacterium tuberculosis (strain CDC 1551 / Oshkosh).